We begin with the raw amino-acid sequence, 418 residues long: Nisin biosynthesis protein NisC (418 aa).

To B.subtilis SpaC and S.epidermidis EpiC.

Could be implicated in the processing or the export process of the nisin lantibiotic. The protein is Nisin biosynthesis protein NisC (nisC) of Lactococcus lactis subsp. lactis (Streptococcus lactis).